A 177-amino-acid polypeptide reads, in one-letter code: Large ribosomal subunit protein uL6 (177 aa).

This sequence belongs to the universal ribosomal protein uL6 family. Part of the 50S ribosomal subunit.

This protein binds to the 23S rRNA, and is important in its secondary structure. It is located near the subunit interface in the base of the L7/L12 stalk, and near the tRNA binding site of the peptidyltransferase center. This chain is Large ribosomal subunit protein uL6, found in Cupriavidus metallidurans (strain ATCC 43123 / DSM 2839 / NBRC 102507 / CH34) (Ralstonia metallidurans).